A 638-amino-acid chain; its full sequence is MKKSIYRSLKTQQHPLLLRRPLPPKLPKVPLLKKKVRIVHTVKAREPKEETYGKFDPDESAFVKMDQNVSQSQRPTSTQTICLDYDHKALERVVNIFPHQHRVRRFHWKVPKSTAGSMFIPRCLSASSRIFKNTLSQMKKRAKKSSKKEVKEDGYLTKKTFNTLVLSKEFSKPSPTSYSRFIASKFKPLGTQFHPAPKISGYSQELPLLRDVKRAALSPVPSTSSVIPEPQWSERTHPSAAPSKVVLNTGSLPPARSLPTPVLPRKPLRQAMIENAAAAAAAAAAAAAATTTTTTTTTTTTTAVTTTAAVSGKTEAHKPPETVQRTTRTIGPDAHVLRGEGFKAVAATRSETVLALTTLAIINCQIYGRNALNLKGFFLANCPDLTPVAFQLVYLNLSFNDLNQFPIEILYLQNLQVLKLRNNPIKEIPSEIHLLTYLRIFSIAFNYITKLPDGLFCLNYLEELDVSYNEIENISNEIQKLRSLEKLIVDGNPITSFPPGILKLNLIKLQIENTFTCSQFWLESSWNDPQQLTQICSLFLVKNKLLDYIPDAVRKSLKSTSECDWCHGPKFGEGFRIIRSCDIFGVSHVPIMFHVCSSTCYRDIRETSFVLEGFPSRRIALHMDWVKESKVSNVSFYL.

Disordered regions lie at residues 220–241 (VPST…PSAA) and 306–325 (TTAA…TVQR). LRR repeat units follow at residues 389–412 (AFQL…ILYL), 413–435 (QNLQ…IHLL), 437–458 (YLRI…LFCL), 460–481 (YLEE…IQKL), 482–504 (RSLE…ILKL), and 532–556 (LTQI…VRKS).

This is Leucine-rich repeat-containing protein 63 from Mus musculus (Mouse).